We begin with the raw amino-acid sequence, 753 residues long: LON peptidase N-terminal domain and RING finger protein 3 (753 aa).

The tract at residues 17-57 (GSNNLELAEPEEPGTSAAAGQSAAHPEEVTPEGSQALGAQE) is disordered. A TPR 1 repeat occupies 72 to 105 (CKVLLTQADALASEGHLREALEVYRQLSERQQLV). Residues 159 to 197 (CKKCHGFLSDPVSLWCGHTFCKLCLERGRAADRRCALCG) form an RING-type 1 zinc finger. TPR repeat units follow at residues 244-277 (ASQL…APND), 279-311 (LLYS…RPMG), and 313-345 (KAHF…DGKN). A disordered region spans residues 351 to 450 (EAQRENLELP…QGAKPDLSNP (100 aa)). The span at 363 to 382 (SNQEGAAAAEESSSLANSAQ) shows a compositional bias: low complexity. A compositionally biased stretch (basic and acidic residues) spans 386-413 (SSKEDRKKDQEGEDRDAASVRTGKCQEK). The RING-type 2 zinc finger occupies 461-499 (CSLCMRLFYEPVTTPCGHTFCLKCLERCLDHNAKCPLCK). The Lon N-terminal domain occupies 540–749 (MEELSNLNKN…GIRRILAFIS (210 aa)).

In Mus musculus (Mouse), this protein is LON peptidase N-terminal domain and RING finger protein 3 (Lonrf3).